Reading from the N-terminus, the 196-residue chain is Ribosomal RNA small subunit methyltransferase G (196 aa).

Residues Gly77, Phe82, 127-128, and Arg140 each bind S-adenosyl-L-methionine; that span reads AE.

It belongs to the methyltransferase superfamily. RNA methyltransferase RsmG family.

The protein resides in the cytoplasm. Functionally, specifically methylates the N7 position of a guanine in 16S rRNA. In Aquifex aeolicus (strain VF5), this protein is Ribosomal RNA small subunit methyltransferase G.